Here is a 265-residue protein sequence, read N- to C-terminus: 4-hydroxy-tetrahydrodipicolinate reductase (265 aa).

16–21 (GANGKM) serves as a coordination point for NAD(+). An NADP(+)-binding site is contributed by Arg-43. Residues 106–108 (GTT) and 130–133 (SENF) contribute to the NAD(+) site. The Proton donor/acceptor role is filled by His-164. His-165 serves as a coordination point for (S)-2,3,4,5-tetrahydrodipicolinate. The active-site Proton donor is Lys-168. 174-175 (AT) is a (S)-2,3,4,5-tetrahydrodipicolinate binding site.

Belongs to the DapB family. As to quaternary structure, homotetramer.

Its subcellular location is the cytoplasm. It carries out the reaction (S)-2,3,4,5-tetrahydrodipicolinate + NAD(+) + H2O = (2S,4S)-4-hydroxy-2,3,4,5-tetrahydrodipicolinate + NADH + H(+). The catalysed reaction is (S)-2,3,4,5-tetrahydrodipicolinate + NADP(+) + H2O = (2S,4S)-4-hydroxy-2,3,4,5-tetrahydrodipicolinate + NADPH + H(+). Its pathway is amino-acid biosynthesis; L-lysine biosynthesis via DAP pathway; (S)-tetrahydrodipicolinate from L-aspartate: step 4/4. Functionally, catalyzes the conversion of 4-hydroxy-tetrahydrodipicolinate (HTPA) to tetrahydrodipicolinate. This chain is 4-hydroxy-tetrahydrodipicolinate reductase, found in Wigglesworthia glossinidia brevipalpis.